A 342-amino-acid chain; its full sequence is Dihydroorotate dehydrogenase (quinone) (342 aa).

Residues 60–64 (AGFDK) and Thr84 contribute to the FMN site. Lys64 provides a ligand contact to substrate. 109–113 (NRMGF) is a binding site for substrate. Residues Asn137 and Asn170 each coordinate FMN. Asn170 serves as a coordination point for substrate. Ser173 functions as the Nucleophile in the catalytic mechanism. Substrate is bound at residue Asn175. FMN is bound by residues Lys215 and Thr243. Residue 244–245 (NT) coordinates substrate. Residues Gly266, Gly295, and 316 to 317 (YT) contribute to the FMN site.

This sequence belongs to the dihydroorotate dehydrogenase family. Type 2 subfamily. In terms of assembly, monomer. FMN serves as cofactor.

The protein localises to the cell membrane. The catalysed reaction is (S)-dihydroorotate + a quinone = orotate + a quinol. It functions in the pathway pyrimidine metabolism; UMP biosynthesis via de novo pathway; orotate from (S)-dihydroorotate (quinone route): step 1/1. In terms of biological role, catalyzes the conversion of dihydroorotate to orotate with quinone as electron acceptor. The polypeptide is Dihydroorotate dehydrogenase (quinone) (Halorhodospira halophila (strain DSM 244 / SL1) (Ectothiorhodospira halophila (strain DSM 244 / SL1))).